Consider the following 269-residue polypeptide: Small ribosomal subunit protein uS2 (269 aa).

It belongs to the universal ribosomal protein uS2 family.

In Synechocystis sp. (strain ATCC 27184 / PCC 6803 / Kazusa), this protein is Small ribosomal subunit protein uS2 (rpsB).